A 1184-amino-acid polypeptide reads, in one-letter code: uncharacterized protein (1184 aa).

Disordered stretches follow at residues Glu-115–Ser-152 and Thr-397–Arg-426. Polar residues-rich tracts occupy residues His-137–Ser-152 and Thr-397–Asn-421. Phosphoserine is present on Ser-686. Basic and acidic residues-rich tracts occupy residues Leu-705–His-767, Phe-783–Tyr-792, Ser-849–Gly-863, and Tyr-891–Thr-902. Disordered regions lie at residues Leu-705 to Val-870 and Asp-890 to Lys-1017. Ser-905 is modified (phosphoserine). The segment covering Glu-920 to His-932 has biased composition (basic and acidic residues). Residues Ser-941–Ser-950 show a composition bias toward low complexity. Positions Pro-999–Leu-1011 are enriched in basic and acidic residues. The residue at position 1018 (Ser-1018) is a Phosphoserine. 2 disordered regions span residues Asn-1029–Gln-1107 and Asp-1135–Pro-1154. Residues Asp-1032–Ser-1045 show a composition bias toward basic and acidic residues. Polar residues predominate over residues Pro-1073–Gln-1107. The span at Asn-1138–Ser-1150 shows a compositional bias: low complexity.

The protein localises to the cytoplasm. This is an uncharacterized protein from Schizosaccharomyces pombe (strain 972 / ATCC 24843) (Fission yeast).